We begin with the raw amino-acid sequence, 102 residues long: Small ribosomal subunit protein uS10 (102 aa).

It belongs to the universal ribosomal protein uS10 family. Part of the 30S ribosomal subunit.

In terms of biological role, involved in the binding of tRNA to the ribosomes. This chain is Small ribosomal subunit protein uS10, found in Caldanaerobacter subterraneus subsp. tengcongensis (strain DSM 15242 / JCM 11007 / NBRC 100824 / MB4) (Thermoanaerobacter tengcongensis).